The following is a 302-amino-acid chain: 4-hydroxy-tetrahydrodipicolinate synthase (302 aa).

Thr-46 provides a ligand contact to pyruvate. The Proton donor/acceptor role is filled by Tyr-134. Catalysis depends on Lys-162, which acts as the Schiff-base intermediate with substrate. Pyruvate is bound at residue Ile-204.

The protein belongs to the DapA family. As to quaternary structure, homotetramer; dimer of dimers.

It localises to the cytoplasm. The catalysed reaction is L-aspartate 4-semialdehyde + pyruvate = (2S,4S)-4-hydroxy-2,3,4,5-tetrahydrodipicolinate + H2O + H(+). It functions in the pathway amino-acid biosynthesis; L-lysine biosynthesis via DAP pathway; (S)-tetrahydrodipicolinate from L-aspartate: step 3/4. Catalyzes the condensation of (S)-aspartate-beta-semialdehyde [(S)-ASA] and pyruvate to 4-hydroxy-tetrahydrodipicolinate (HTPA). The protein is 4-hydroxy-tetrahydrodipicolinate synthase of Xanthomonas axonopodis pv. citri (strain 306).